Here is a 729-residue protein sequence, read N- to C-terminus: DNA topoisomerase 3 (729 aa).

The Toprim domain maps to 3–136 (KSVVIAEKPS…IKRLWISSVT (134 aa)). Mg(2+) is bound by residues Glu-9 and Asp-105. One can recognise a Topo IA-type catalytic domain in the interval 153 to 594 (YDNLYASAVA…EMKNYTKEIV (442 aa)). The segment at 187–192 (NCGRVQ) is interaction with DNA. Residue Tyr-310 is the O-(5'-phospho-DNA)-tyrosine intermediate of the active site. The segment covering 686–713 (ERRKKESGNKADKRDVQKYMKQQNKEEE) has biased composition (basic and acidic residues). The disordered stretch occupies residues 686–719 (ERRKKESGNKADKRDVQKYMKQQNKEEEPLNNPF).

This sequence belongs to the type IA topoisomerase family. Mg(2+) serves as cofactor.

It catalyses the reaction ATP-independent breakage of single-stranded DNA, followed by passage and rejoining.. In terms of biological role, releases the supercoiling and torsional tension of DNA, which is introduced during the DNA replication and transcription, by transiently cleaving and rejoining one strand of the DNA duplex. Introduces a single-strand break via transesterification at a target site in duplex DNA. The scissile phosphodiester is attacked by the catalytic tyrosine of the enzyme, resulting in the formation of a DNA-(5'-phosphotyrosyl)-enzyme intermediate and the expulsion of a 3'-OH DNA strand. The free DNA strand then undergoes passage around the unbroken strand, thus removing DNA supercoils. Finally, in the religation step, the DNA 3'-OH attacks the covalent intermediate to expel the active-site tyrosine and restore the DNA phosphodiester backbone. This is DNA topoisomerase 3 from Bacillus cereus (strain ATCC 14579 / DSM 31 / CCUG 7414 / JCM 2152 / NBRC 15305 / NCIMB 9373 / NCTC 2599 / NRRL B-3711).